An 85-amino-acid chain; its full sequence is Small ribosomal subunit protein uS17 (85 aa).

This sequence belongs to the universal ribosomal protein uS17 family. In terms of assembly, part of the 30S ribosomal subunit.

In terms of biological role, one of the primary rRNA binding proteins, it binds specifically to the 5'-end of 16S ribosomal RNA. This chain is Small ribosomal subunit protein uS17, found in Acinetobacter baumannii (strain AB307-0294).